A 677-amino-acid polypeptide reads, in one-letter code: Vertnin (677 aa).

Disordered regions lie at residues 356–376 and 458–490; these read GSTGELSPGDSTEQDYWSSPE and HSGSSEEGSDADKSQSPRSQMSPSKFDRQKLSP. Positions 458–472 are enriched in basic and acidic residues; it reads HSGSSEEGSDADKSQ.

Belongs to the vertnin family.

Its subcellular location is the nucleus. Its function is as follows. Functions as a transcriptional repressor that modulates bmp2b expression during dorsoventral patterning. The polypeptide is Vertnin (vrtn) (Danio rerio (Zebrafish)).